The following is a 140-amino-acid chain: MAQGRRVERVAALIRKEVSELMINGIRDERVHHGMVSITEVEVSGDLQHCKIFVSVFGEAQERDQVLEGLQAASGFLRGELGRRLQMRRAPEVVFQLDRGLERGTSVLGLLNRLEDERQQRGDIPPGSDQQPGSDEQPTG.

Positions Glu115–Gly140 are disordered. Positions Ser128–Gly140 are enriched in polar residues.

The protein belongs to the RbfA family. Monomer. Binds 30S ribosomal subunits, but not 50S ribosomal subunits or 70S ribosomes.

Its subcellular location is the cytoplasm. In terms of biological role, one of several proteins that assist in the late maturation steps of the functional core of the 30S ribosomal subunit. Associates with free 30S ribosomal subunits (but not with 30S subunits that are part of 70S ribosomes or polysomes). Required for efficient processing of 16S rRNA. May interact with the 5'-terminal helix region of 16S rRNA. This is Ribosome-binding factor A from Synechococcus sp. (strain CC9605).